The primary structure comprises 196 residues: Probable thymidylate kinase (196 aa).

Gly7–Thr14 contributes to the ATP binding site.

It belongs to the thymidylate kinase family.

It carries out the reaction dTMP + ATP = dTDP + ADP. The sequence is that of Probable thymidylate kinase (tmk) from Archaeoglobus fulgidus (strain ATCC 49558 / DSM 4304 / JCM 9628 / NBRC 100126 / VC-16).